The following is an 814-amino-acid chain: Transcription activator of gluconeogenesis PADG_03802 (814 aa).

Residues 1-90 (MTSSARNGSP…SAKDPLRPRR (90 aa)) are disordered. Low complexity predominate over residues 69–83 (STSSTAASANNASAK). A DNA-binding region (zn(2)-C6 fungal-type) is located at residues 97–125 (CFACQRAHLTCGDERPCQRCIKRGLQDTC). 6 disordered regions span residues 164–208 (NTNS…TNNY), 236–287 (SAFQ…PTFF), 323–384 (AGDT…SRNI), 442–461 (PPTNTQHQQQPQPPRISTPS), 598–617 (TGGSSSSGVSSRGSSTYNSR), and 695–739 (SAAG…ATNV). Residues 171 to 188 (NGTNSNSDNNSTNTNSNN) are compositionally biased toward low complexity. 4 stretches are compositionally biased toward polar residues: residues 189–208 (KPSHQDVSTNFFSTPSTNNY), 248–279 (FDLSSNPQNHTLSPSMAQNSGTTPSSSASQNP), 339–359 (GRSSGTFTVQNFGEGSSNQSP), and 375–384 (GQGQTNSRNI). Residues 442–451 (PPTNTQHQQQ) are compositionally biased toward low complexity. The span at 720–739 (GTTSAVNGVSNGSGNNATNV) shows a compositional bias: low complexity.

Belongs to the ERT1/acuK family.

It is found in the nucleus. In terms of biological role, transcription factor which regulates nonfermentable carbon utilization. Activator of gluconeogenetic genes. The protein is Transcription activator of gluconeogenesis PADG_03802 of Paracoccidioides brasiliensis (strain Pb18).